We begin with the raw amino-acid sequence, 694 residues long: Transcription activator of gluconeogenesis Pc22g08580 (694 aa).

Residues 1–61 (MNMETKNGSP…DPSRPRRKKA (61 aa)) are disordered. Over residues 17–55 (SGERDSADITEHEQMDVKPKTNGDSKADRKAANAKDPSR) the composition is skewed to basic and acidic residues. Positions 65-93 (CFACQRAHLTCGDERPCQRCIKRGLQDAC) form a DNA-binding region, zn(2)-C6 fungal-type. 3 disordered regions span residues 126–240 (TLRN…GPFF), 276–300 (AAGDSPTDSAGQRGSIGRSGSAQFS), and 552–582 (TGGSAVPQSGTTSRGSFTPRGSTLENSGTGR). A compositionally biased stretch (polar residues) spans 132–141 (PISRNGTNAV). The span at 142–171 (NSNQQHSQQHPQQPTNPTNNNFYPTPQTQT) shows a compositional bias: low complexity. 3 stretches are compositionally biased toward polar residues: residues 172-234 (GSYN…SQNP), 281-300 (PTDSAGQRGSIGRSGSAQFS), and 552-581 (TGGSAVPQSGTTSRGSFTPRGSTLENSGTG).

Belongs to the ERT1/acuK family.

It is found in the nucleus. In terms of biological role, transcription factor which regulates nonfermentable carbon utilization. Activator of gluconeogenetic genes. This Penicillium rubens (strain ATCC 28089 / DSM 1075 / NRRL 1951 / Wisconsin 54-1255) (Penicillium chrysogenum) protein is Transcription activator of gluconeogenesis Pc22g08580.